Consider the following 101-residue polypeptide: Interleukin-8 (101 aa).

An N-terminal signal peptide occupies residues 1–22 (MTSKLAVALLAAFLLSAALCEA). 2 cysteine pairs are disulfide-bonded: Cys34–Cys61 and Cys36–Cys77.

Belongs to the intercrine alpha (chemokine CxC) family. In terms of assembly, homodimer. Interacts with TNFAIP6 (via Link domain); this interaction interferes with chemokine binding to glycosaminoglycans.

Its subcellular location is the secreted. Its function is as follows. Chemotactic factor that mediates inflammatory response by attracting neutrophils, basophils, and T-cells to clear pathogens and protect the host from infection. Also plays an important role in neutrophil activation. Released in response to an inflammatory stimulus, exerts its effect by binding to the G-protein-coupled receptors CXCR1 and CXCR2, primarily found in neutrophils, monocytes and endothelial cells. G-protein heterotrimer (alpha, beta, gamma subunits) constitutively binds to CXCR1/CXCR2 receptor and activation by IL8 leads to beta and gamma subunits release from Galpha (GNAI2 in neutrophils) and activation of several downstream signaling pathways including PI3K and MAPK pathways. This is Interleukin-8 (CXCL8) from Bos taurus (Bovine).